The sequence spans 318 residues: Ribose-phosphate pyrophosphokinase 1 (318 aa).

Residue 96 to 101 coordinates ATP; the sequence is RQDKKD. Mg(2+) is bound by residues Asp128, His130, Asp139, and Asp143. His130 provides a ligand contact to ATP. The segment at 212–227 is binding of phosphoribosylpyrophosphate; that stretch reads KDRVAILVDDMADTCG.

It belongs to the ribose-phosphate pyrophosphokinase family. In terms of assembly, homodimer. The active form is probably a hexamer composed of 3 homodimers. Mg(2+) is required as a cofactor.

It catalyses the reaction D-ribose 5-phosphate + ATP = 5-phospho-alpha-D-ribose 1-diphosphate + AMP + H(+). It functions in the pathway metabolic intermediate biosynthesis; 5-phospho-alpha-D-ribose 1-diphosphate biosynthesis; 5-phospho-alpha-D-ribose 1-diphosphate from D-ribose 5-phosphate (route I): step 1/1. Activated by magnesium and inorganic phosphate. Its function is as follows. Catalyzes the synthesis of phosphoribosylpyrophosphate (PRPP) that is essential for nucleotide synthesis. This Macaca fascicularis (Crab-eating macaque) protein is Ribose-phosphate pyrophosphokinase 1 (PRPS1).